The chain runs to 340 residues: Probable cyclic nucleotide phosphodiesterase PsycPRwf_0181 (340 aa).

Residues 1-36 are disordered; it reads MAPLPHSVSPRHTQVADNGRLSEPTDYHPPTEISTD. Residues D47, H49, D128, N158, H237, H276, and H278 each coordinate Fe cation. AMP-binding positions include H49, D128, and 158–159; that span reads NH. H278 contributes to the AMP binding site.

The protein belongs to the cyclic nucleotide phosphodiesterase class-III family. It depends on Fe(2+) as a cofactor.

The polypeptide is Probable cyclic nucleotide phosphodiesterase PsycPRwf_0181 (Psychrobacter sp. (strain PRwf-1)).